Consider the following 390-residue polypeptide: Peroxisomal sarcosine oxidase (390 aa).

Residue 9 to 39 (DAIVIGAGIQGCFTAYHLAKHRKRILLLEQF) coordinates FAD. The residue at position 126 (K126) is an N6-acetyllysine. At C319 the chain carries S-8alpha-FAD cysteine. The short motif at 388 to 390 (AHL) is the Microbody targeting signal element.

The protein belongs to the MSOX/MTOX family. The cofactor is FAD. As to expression, expressed in the liver and kidney.

It localises to the peroxisome. The enzyme catalyses sarcosine + O2 + H2O = formaldehyde + glycine + H2O2. The catalysed reaction is L-pipecolate + O2 = L-1-piperideine-6-carboxylate + H2O2 + H(+). Metabolizes sarcosine and L-pipecolic acid. The polypeptide is Peroxisomal sarcosine oxidase (PIPOX) (Homo sapiens (Human)).